The chain runs to 237 residues: 7-cyano-7-deazaguanine synthase (237 aa).

Position 14–24 (14–24 (FSGGQDSATCL)) interacts with ATP. Zn(2+) is bound by residues Cys202, Cys217, Cys220, and Cys223.

The protein belongs to the QueC family. Requires Zn(2+) as cofactor.

It catalyses the reaction 7-carboxy-7-deazaguanine + NH4(+) + ATP = 7-cyano-7-deazaguanine + ADP + phosphate + H2O + H(+). Its pathway is purine metabolism; 7-cyano-7-deazaguanine biosynthesis. Catalyzes the ATP-dependent conversion of 7-carboxy-7-deazaguanine (CDG) to 7-cyano-7-deazaguanine (preQ(0)). This Rhodopseudomonas palustris (strain ATCC BAA-98 / CGA009) protein is 7-cyano-7-deazaguanine synthase.